We begin with the raw amino-acid sequence, 1082 residues long: Importin-4 (1082 aa).

Met-1 bears the N-acetylmethionine mark. In terms of domain architecture, Importin N-terminal spans 24-90 (ATEQLQTILR…KSLVLTALQK (67 aa)). HEAT repeat units lie at residues 348–385 (KLCP…GAGD), 390–427 (RLLY…NLQP), 431–471 (SYSE…NLGP), 475–513 (PYLP…AAQD), 896–933 (QFVS…HGGC), and 937–975 (DHFP…ASPV).

This sequence belongs to the importin beta family. As to quaternary structure, found in a cytosolic complex with ASF1 (ASF1A or ASF1B) and histones H3 and H4.

Its subcellular location is the cytoplasm. It is found in the nucleus. Nuclear transport receptor that mediates nuclear import of proteins, such as histones, RPS3A, TNP2 and VDR. Serves as receptor for nuclear localization signals (NLS) in cargo substrates. Is thought to mediate docking of the importin/substrate complex to the nuclear pore complex (NPC) through binding to nucleoporin and the complex is subsequently translocated through the pore by an energy requiring, Ran-dependent mechanism. At the nucleoplasmic side of the NPC, Ran binds to the importin, the importin/substrate complex dissociates and importin is re-exported from the nucleus to the cytoplasm where GTP hydrolysis releases Ran. The directionality of nuclear import is thought to be conferred by an asymmetric distribution of the GTP- and GDP-bound forms of Ran between the cytoplasm and nucleus. Mediates the nuclear import of the histone H3-H4 dimer when in complex with ASF1 (ASF1A or ASF1B). Mediates the ligand-independent nuclear import of vitamin D receptor (VDR). The protein is Importin-4 (Ipo4) of Mus musculus (Mouse).